The sequence spans 353 residues: Protein AC18 (353 aa).

Its subcellular location is the host nucleus. It is found in the host cytoplasm. May play a role in occlusion-derived virions (ODV) formation and/or regulation of late viral gene expression. The protein is Protein AC18 (DA41) of Autographa californica nuclear polyhedrosis virus (AcMNPV).